Here is a 510-residue protein sequence, read N- to C-terminus: Glycerol kinase (510 aa).

Threonine 14 contacts ADP. Residues threonine 14 and threonine 15 each contribute to the ATP site. Residue threonine 14 participates in sn-glycerol 3-phosphate binding. Arginine 18 serves as a coordination point for ADP. Sn-glycerol 3-phosphate is bound by residues arginine 84, glutamate 85, tyrosine 136, and aspartate 256. The glycerol site is built by arginine 84, glutamate 85, tyrosine 136, aspartate 256, and glutamine 257. Threonine 278, glycine 322, glycine 422, and asparagine 426 together coordinate ADP. 3 residues coordinate ATP: threonine 278, glycine 322, and glycine 422.

Belongs to the FGGY kinase family.

It carries out the reaction glycerol + ATP = sn-glycerol 3-phosphate + ADP + H(+). It participates in polyol metabolism; glycerol degradation via glycerol kinase pathway; sn-glycerol 3-phosphate from glycerol: step 1/1. In terms of biological role, key enzyme in the regulation of glycerol uptake and metabolism. Catalyzes the phosphorylation of glycerol to yield sn-glycerol 3-phosphate. It also catalyzes the phosphorylation of dihydroxyacetone (DHA). Involved, together with the DHA kinase DhaKLM, in the metabolism of DHA. The chain is Glycerol kinase from Haloferax volcanii (strain ATCC 29605 / DSM 3757 / JCM 8879 / NBRC 14742 / NCIMB 2012 / VKM B-1768 / DS2) (Halobacterium volcanii).